The following is a 356-amino-acid chain: Nicotinate-nucleotide--dimethylbenzimidazole phosphoribosyltransferase (356 aa).

Residue glutamate 317 is the Proton acceptor of the active site.

This sequence belongs to the CobT family. Homodimer.

The enzyme catalyses 5,6-dimethylbenzimidazole + nicotinate beta-D-ribonucleotide = alpha-ribazole 5'-phosphate + nicotinate + H(+). Its pathway is nucleoside biosynthesis; alpha-ribazole biosynthesis; alpha-ribazole from 5,6-dimethylbenzimidazole: step 1/2. Catalyzes the synthesis of alpha-ribazole-5'-phosphate from nicotinate mononucleotide (NAMN) and 5,6-dimethylbenzimidazole (DMB). This chain is Nicotinate-nucleotide--dimethylbenzimidazole phosphoribosyltransferase, found in Salmonella paratyphi C (strain RKS4594).